A 271-amino-acid chain; its full sequence is ATP synthase subunit a (271 aa).

5 helical membrane-spanning segments follow: residues 38-58 (FWTL…LFLV), 100-120 (LIAP…LMDL), 146-166 (DVNI…FYSI), 220-240 (LIFI…LNVP), and 242-262 (AIFH…LTIV).

The protein belongs to the ATPase A chain family. F-type ATPases have 2 components, CF(1) - the catalytic core - and CF(0) - the membrane proton channel. CF(1) has five subunits: alpha(3), beta(3), gamma(1), delta(1), epsilon(1). CF(0) has three main subunits: a(1), b(2) and c(9-12). The alpha and beta chains form an alternating ring which encloses part of the gamma chain. CF(1) is attached to CF(0) by a central stalk formed by the gamma and epsilon chains, while a peripheral stalk is formed by the delta and b chains.

The protein resides in the cell inner membrane. Key component of the proton channel; it plays a direct role in the translocation of protons across the membrane. The chain is ATP synthase subunit a from Salmonella arizonae (strain ATCC BAA-731 / CDC346-86 / RSK2980).